Reading from the N-terminus, the 199-residue chain is 7-methyl-GTP pyrophosphatase (199 aa).

Aspartate 76 (proton acceptor) is an active-site residue.

Belongs to the Maf family. YceF subfamily. The cofactor is a divalent metal cation.

The protein localises to the cytoplasm. The catalysed reaction is N(7)-methyl-GTP + H2O = N(7)-methyl-GMP + diphosphate + H(+). Its function is as follows. Nucleoside triphosphate pyrophosphatase that hydrolyzes 7-methyl-GTP (m(7)GTP). May have a dual role in cell division arrest and in preventing the incorporation of modified nucleotides into cellular nucleic acids. This is 7-methyl-GTP pyrophosphatase from Mesorhizobium japonicum (strain LMG 29417 / CECT 9101 / MAFF 303099) (Mesorhizobium loti (strain MAFF 303099)).